We begin with the raw amino-acid sequence, 264 residues long: MSVSVNINNVTKEYRIYRNNKERIKDALIPKNKNNTFFALDDVSITAHEGDVIGLVGINGSGKSTLSNMIGGSISPTSGNIERNGEVSVIAINAGLNGRLTGVENIEFKMLCMGFKRKEIKQLMPQVIEFSELGEFIHQPVKNYSSGMRAKLGFSINVTINPDILVIDEALSVGDQTFTQKCLDKIYEFKEANKTIFFVSHNIRQVREFCTKIAWIEGGKLKEYGDLEEVLPKYEQFLKDFKKKSKADQKAFRKGLDEKRFIVK.

The ABC transporter domain occupies 24 to 243 (IKDALIPKNK…YEQFLKDFKK (220 aa)). Position 57 to 64 (57 to 64 (GINGSGKS)) interacts with ATP.

It belongs to the ABC transporter superfamily. Teichoic acids exporter (TC 3.A.1.104.1) family. The complex is composed of two ATP-binding proteins (TagH) and two transmembrane proteins (TagG).

The protein localises to the cell membrane. The catalysed reaction is ATP + H2O + teichoic acidSide 1 = ADP + phosphate + teichoic acidSide 2.. Part of the ABC transporter complex TagGH involved in teichoic acids export. Responsible for energy coupling to the transport system. The polypeptide is Teichoic acids export ATP-binding protein TagH (Staphylococcus haemolyticus (strain JCSC1435)).